A 684-amino-acid chain; its full sequence is Beta-taxilin (684 aa).

Residues 1–26 (MEANHSEQLSAERQSTPPGDSSSLPS) show a composition bias toward polar residues. Positions 1–132 (MEANHSEQLS…KEPVSNKEQK (132 aa)) are disordered. A compositionally biased stretch (basic and acidic residues) spans 45–64 (PEKEASVHPDISEELNRQLE). Residues 93 to 107 (ESPDNEDGDCEETTE) show a composition bias toward acidic residues. Coiled coils occupy residues 135–351 (KKIL…VLKE) and 378–467 (NEVF…SEKD). Over residues 458-475 (IRDAEISEKDDQSQHNSD) the composition is skewed to basic and acidic residues. Disordered stretches follow at residues 458–485 (IRDAEISEKDDQSQHNSDEEPESNVSVD), 514–632 (ESTP…DVPA), and 646–684 (PACEPSRQPPRAAAEELPVGASAGPQPRNVADTNLEGVD). Residues Ser474 and Ser483 each carry the phosphoserine modification. The span at 514–524 (ESTPHQSKETQ) shows a compositional bias: basic and acidic residues. The segment covering 613–622 (QAPQAPTEAS) has biased composition (polar residues).

Belongs to the taxilin family. As to quaternary structure, binds to the C-terminal coiled coil region of syntaxin family members STX1A, STX3A and STX4A. Has a preference for STX1A. In terms of tissue distribution, expressed in skeletal muscle.

In terms of biological role, promotes motor nerve regeneration. May be involved in intracellular vesicle traffic. In Homo sapiens (Human), this protein is Beta-taxilin (TXLNB).